The primary structure comprises 1330 residues: ABC multidrug transporter mdr4 (1330 aa).

Asn3 carries N-linked (GlcNAc...) asparagine glycosylation. Helical transmembrane passes span 90 to 110 (VLLIIGGLLFAICAGIPFPLL), 144 to 164 (VLYVIYITIANFCFIYAHSTC), 218 to 238 (KVGLVISTLSYFVAAYVVAFI), 243 to 263 (IAGMLVSVVPCFFLMALGGGH), 324 to 344 (HAAQLGCLYFIAYSANALAFW), and 370 to 390 (IFVLIDASFILSQVAPFIHVF). Positions 94–392 (IGGLLFAICA…VAPFIHVFAS (299 aa)) constitute an ABC transmembrane type-1 1 domain. The ABC transporter 1 domain maps to 428–666 (IRFRDVHFKY…GGVYAEMVRL (239 aa)). Residue 463 to 470 (GPSGGGKS) participates in ATP binding. N-linked (GlcNAc...) asparagine glycosylation is present at Asn707. The segment at 717–736 (VADTPSDSRDGSEEEARKKR) is disordered. The segment covering 722–733 (SDSRDGSEEEAR) has biased composition (basic and acidic residues). The next 6 helical transmembrane spans lie at 761-781 (LLGLAMSVIIGGSYSAEAIVF), 806-826 (LLFFILALVEFGANVVGGCAF), 871-893 (ASALGGITGTTIGLLLATAVNLI), 903-923 (AWKITIVLFPTIPVLLVSGMM), 989-1009 (AWLALAFSISNLVYALAYWWG), and 1023-1043 (FFIVMPALLFSTQSCGQMFAL). Residues 761-1049 (LLGLAMSVII…MFALAPDISK (289 aa)) enclose the ABC transmembrane type-1 2 domain. The ABC transporter 2 domain maps to 1086–1325 (AQLRDVHFTY…SETYRTSVIH (240 aa)). 1121–1128 (GPSGSGKS) serves as a coordination point for ATP.

This sequence belongs to the ABC transporter superfamily. ABCB family. Multidrug resistance exporter (TC 3.A.1.201) subfamily.

The protein resides in the cell membrane. The enzyme catalyses itraconazole(in) + ATP + H2O = itraconazole(out) + ADP + phosphate + H(+). It catalyses the reaction voriconazole(in) + ATP + H2O = voriconazole(out) + ADP + phosphate + H(+). In terms of biological role, pleiotropic ABC efflux transporter that confers resistance to azoles such as itraconazole and voriconazole. This chain is ABC multidrug transporter mdr4, found in Aspergillus fumigatus (strain ATCC MYA-4609 / CBS 101355 / FGSC A1100 / Af293) (Neosartorya fumigata).